Consider the following 181-residue polypeptide: Oligoribonuclease (181 aa).

Residues 8-171 enclose the Exonuclease domain; the sequence is LIWIDLEMTG…QDIQESIAEL (164 aa). Tyr-129 is an active-site residue.

Belongs to the oligoribonuclease family.

The protein localises to the cytoplasm. Its function is as follows. 3'-to-5' exoribonuclease specific for small oligoribonucleotides. The chain is Oligoribonuclease from Shewanella putrefaciens (strain CN-32 / ATCC BAA-453).